We begin with the raw amino-acid sequence, 60 residues long: uncharacterized protein (60 aa).

Residues 19 to 39 form a helical membrane-spanning segment; sequence LSIMCGCSIYFLLLVFILTFY.

It localises to the membrane. This is an uncharacterized protein from Saccharomyces cerevisiae (strain ATCC 204508 / S288c) (Baker's yeast).